We begin with the raw amino-acid sequence, 459 residues long: Ribulose bisphosphate carboxylase large chain (459 aa).

Lys4 is modified (N6,N6,N6-trimethyllysine). Positions 113 and 163 each coordinate substrate. Residue Lys165 is the Proton acceptor of the active site. Position 167 (Lys167) interacts with substrate. Mg(2+)-binding residues include Lys191, Asp193, and Glu194. An N6-carboxylysine modification is found at Lys191. His284 acts as the Proton acceptor in catalysis. Arg285, His317, and Ser369 together coordinate substrate.

This sequence belongs to the RuBisCO large chain family. Type I subfamily. As to quaternary structure, heterohexadecamer of 8 large chains and 8 small chains; disulfide-linked. The disulfide link is formed within the large subunit homodimers. It depends on Mg(2+) as a cofactor. In terms of processing, the disulfide bond which can form in the large chain dimeric partners within the hexadecamer appears to be associated with oxidative stress and protein turnover.

It localises to the plastid. Its subcellular location is the chloroplast. It carries out the reaction 2 (2R)-3-phosphoglycerate + 2 H(+) = D-ribulose 1,5-bisphosphate + CO2 + H2O. It catalyses the reaction D-ribulose 1,5-bisphosphate + O2 = 2-phosphoglycolate + (2R)-3-phosphoglycerate + 2 H(+). In terms of biological role, ruBisCO catalyzes two reactions: the carboxylation of D-ribulose 1,5-bisphosphate, the primary event in carbon dioxide fixation, as well as the oxidative fragmentation of the pentose substrate in the photorespiration process. Both reactions occur simultaneously and in competition at the same active site. The protein is Ribulose bisphosphate carboxylase large chain of Heuchera micrantha (Alum root).